Reading from the N-terminus, the 418-residue chain is Transcription termination factor Rho (418 aa).

Positions 48–123 (SIFGEGTLEV…VKVDKVNGEA (76 aa)) constitute a Rho RNA-BD domain. Residues 169–174 (GKGQRA), 181–186 (KSGKTV), and Arg-212 contribute to the ATP site.

Belongs to the Rho family. As to quaternary structure, homohexamer. The homohexamer assembles into an open ring structure.

Functionally, facilitates transcription termination by a mechanism that involves Rho binding to the nascent RNA, activation of Rho's RNA-dependent ATPase activity, and release of the mRNA from the DNA template. This is Transcription termination factor Rho from Chromobacterium violaceum (strain ATCC 12472 / DSM 30191 / JCM 1249 / CCUG 213 / NBRC 12614 / NCIMB 9131 / NCTC 9757 / MK).